The primary structure comprises 445 residues: UDP-N-acetylmuramoylalanine--D-glutamate ligase (445 aa).

111–117 (GTNGKST) is a binding site for ATP.

It belongs to the MurCDEF family.

The protein localises to the cytoplasm. The enzyme catalyses UDP-N-acetyl-alpha-D-muramoyl-L-alanine + D-glutamate + ATP = UDP-N-acetyl-alpha-D-muramoyl-L-alanyl-D-glutamate + ADP + phosphate + H(+). It participates in cell wall biogenesis; peptidoglycan biosynthesis. In terms of biological role, cell wall formation. Catalyzes the addition of glutamate to the nucleotide precursor UDP-N-acetylmuramoyl-L-alanine (UMA). In Rickettsia prowazekii (strain Madrid E), this protein is UDP-N-acetylmuramoylalanine--D-glutamate ligase (murD).